The chain runs to 642 residues: Threonine--tRNA ligase (642 aa).

In terms of domain architecture, TGS spans 1 to 61 (MPVITLPDGS…ETDAELSIIT (61 aa)). The interval 243-534 (DHRKIGKQLD…LIEEYAGRFP (292 aa)) is catalytic. Zn(2+)-binding residues include C334, H385, and H511.

Belongs to the class-II aminoacyl-tRNA synthetase family. In terms of assembly, homodimer. The cofactor is Zn(2+).

The protein localises to the cytoplasm. It carries out the reaction tRNA(Thr) + L-threonine + ATP = L-threonyl-tRNA(Thr) + AMP + diphosphate + H(+). Catalyzes the attachment of threonine to tRNA(Thr) in a two-step reaction: L-threonine is first activated by ATP to form Thr-AMP and then transferred to the acceptor end of tRNA(Thr). Also edits incorrectly charged L-seryl-tRNA(Thr). In Shewanella baltica (strain OS195), this protein is Threonine--tRNA ligase.